The sequence spans 674 residues: ATP-dependent DNA helicase Rep (674 aa).

Residues 1–280 (MRLNPGQQHA…IKLEQNYRSS (280 aa)) enclose the UvrD-like helicase ATP-binding domain. Residues 22 to 29 (AGAGSGKT) and Arg278 each bind ATP. The UvrD-like helicase C-terminal domain occupies 281 to 562 (GRILKAANIL…QLMTLHASKG (282 aa)).

This sequence belongs to the helicase family. UvrD subfamily. Homodimer.

It carries out the reaction Couples ATP hydrolysis with the unwinding of duplex DNA by translocating in the 3'-5' direction.. The enzyme catalyses ATP + H2O = ADP + phosphate + H(+). Rep helicase is a single-stranded DNA-dependent ATPase involved in DNA replication; it can initiate unwinding at a nick in the DNA. It binds to the single-stranded DNA and acts in a progressive fashion along the DNA in the 3' to 5' direction. The protein is ATP-dependent DNA helicase Rep of Salmonella typhimurium (strain LT2 / SGSC1412 / ATCC 700720).